We begin with the raw amino-acid sequence, 312 residues long: Regulation of nuclear pre-mRNA domain-containing protein 1A (312 aa).

Serine 2 bears the N-acetylserine mark. Residues 2–133 (SAFSEAALEK…QLKHALYGDK (132 aa)) enclose the CID domain. Residues serine 153, serine 156, and serine 285 each carry the phosphoserine modification. A coiled-coil region spans residues 244–286 (LADFLRCQKEALAEKEHKLEEYKRKLARVSLVRKELRARIQSL).

This sequence belongs to the UPF0400 (RTT103) family. May form a heterodimer with RPRD1B. Associates with the RNA polymerase II subunit POLR2A (via CTD phosphorylated at 'Ser-2' and 'Ser-7' of the heptad repeats).

It localises to the nucleus. Its function is as follows. Interacts with phosphorylated C-terminal heptapeptide repeat domain (CTD) of the largest RNA polymerase II subunit POLR2A, and participates in dephosphorylation of the CTD by RPAP2. May act as a negative regulator of cyclin-D1 (CCND1) and cyclin-E (CCNE1) in the cell cycle. In Mus musculus (Mouse), this protein is Regulation of nuclear pre-mRNA domain-containing protein 1A (Rprd1a).